The sequence spans 898 residues: Phosphoenolpyruvate carboxylase (898 aa).

Catalysis depends on residues His-138 and Lys-561.

This sequence belongs to the PEPCase type 1 family. Mg(2+) serves as cofactor.

The catalysed reaction is oxaloacetate + phosphate = phosphoenolpyruvate + hydrogencarbonate. Forms oxaloacetate, a four-carbon dicarboxylic acid source for the tricarboxylic acid cycle. This Streptococcus pneumoniae serotype 4 (strain ATCC BAA-334 / TIGR4) protein is Phosphoenolpyruvate carboxylase.